The sequence spans 513 residues: Abl interactor 2 (513 aa).

Residue Ser-40 is modified to Phosphoserine. Positions 45 to 107 (RALEETKAYT…DIHKEKVARR (63 aa)) constitute a t-SNARE coiled-coil homology domain. A disordered region spans residues 167–431 (KMGGLPRTTP…PPEDYEEEEA (265 aa)). Residues 174-185 (TTPPTQKPPSPP) show a composition bias toward pro residues. Residues Ser-183 and Ser-227 each carry the phosphoserine modification. The segment covering 217–241 (PTRNMAPSQQSPVRTASVNQRNRTY) has biased composition (polar residues). The segment covering 242-272 (SSSGSSGGSHPSSRSSSRENSGSGSVGVPIA) has biased composition (low complexity). Residues 273 to 282 (VPTPSPPSVF) show a composition bias toward pro residues. Residues 283-325 (PAPAGSAGTPPLPATSASAPAPLVPATVPSSTAPNAAAGGAPN) show a composition bias toward low complexity. Position 361 is a phosphothreonine (Thr-361). The residue at position 368 (Ser-368) is a Phosphoserine. Positions 376–399 (SITSQTSLQNQMNGGPFYSQNPVS) are enriched in polar residues. Pro residues predominate over residues 400–409 (DTPPPPPPVE). Positions 451–510 (SYLEKVVAIYDYTKDKEDELSFQEGAIIYVIKKNDDGWYEGVMNGVTGLFPGNYVESIMH) constitute an SH3 domain.

This sequence belongs to the ABI family. Component of the WAVE complex composed of ABI2, CYFIP1 or CYFIP2, BRK1, NCKAP1 and WASF1/WAVE1. Within the complex, a heterodimer containing NCKAP1 and CYFIP1 interacts with a heterotrimer formed by WAVE1, ABI2 and BRK1. CYFIP2 binds to activated RAC1 which causes the complex to dissociate, releasing activated WASF1. Interacts (via SH3 domain) with ABL1 and ABL2. In terms of assembly, (Microbial infection) Interacts with human cytomegalovirus UL135. In terms of processing, phosphorylated by ABL1. As to expression, widely expressed. Abundant in testes, ovary, thymus, and colon, with lower but detectable levels in prostate, peripheral blood leukocytes, and spleen.

It localises to the cytoplasm. The protein resides in the nucleus. It is found in the cell projection. Its subcellular location is the lamellipodium. The protein localises to the filopodium. It localises to the cytoskeleton. The protein resides in the cell junction. It is found in the adherens junction. Functionally, regulator of actin cytoskeleton dynamics underlying cell motility and adhesion. Functions as a component of the WAVE complex, which activates actin nucleating machinery Arp2/3 to drive lamellipodia formation. Acts as a regulator and substrate of nonreceptor tyrosine kinases ABL1 and ABL2 involved in processes linked to cell growth and differentiation. Positively regulates ABL1-mediated phosphorylation of ENAH, which is required for proper polymerization of nucleated actin filaments at the leading edge. Contributes to the regulation of actin assembly at the tips of neuron projections. In particular, controls dendritic spine morphogenesis and may promote dendritic spine specification toward large mushroom-type spines known as repositories of memory in the brain. In hippocampal neurons, may mediate actin-dependent BDNF-NTRK2 early endocytic trafficking that triggers dendrite outgrowth. Participates in ocular lens morphogenesis, likely by regulating lamellipodia-driven adherens junction formation at the epithelial cell-secondary lens fiber interface. Also required for nascent adherens junction assembly in epithelial cells. In Homo sapiens (Human), this protein is Abl interactor 2.